A 506-amino-acid polypeptide reads, in one-letter code: Galactose/methyl galactoside import ATP-binding protein MglA (506 aa).

ABC transporter domains follow at residues 14–249 (LEMR…VGRS) and 259–506 (NKPG…SLHL). Residue 46-53 (GENGAGKS) coordinates ATP.

Belongs to the ABC transporter superfamily. Galactose/methyl galactoside importer (TC 3.A.1.2.3) family. The complex is composed of one ATP-binding protein (MglA), two transmembrane proteins (MglC) and a solute-binding protein (MglB).

It localises to the cell inner membrane. It catalyses the reaction D-galactose(out) + ATP + H2O = D-galactose(in) + ADP + phosphate + H(+). The catalysed reaction is methyl beta-D-galactoside(out) + ATP + H2O = methyl beta-D-galactoside(in) + ADP + phosphate + H(+). Its activity is regulated as follows. Stimulated 3-fold by galactose and inhibited by vanadate, N-ethylmaleimide, and 5-methoxyindole-2-carboxylic acid. Functionally, part of the ABC transporter complex MglABC involved in galactose/methyl galactoside import. Responsible for energy coupling to the transport system. The polypeptide is Galactose/methyl galactoside import ATP-binding protein MglA (Salmonella typhimurium (strain LT2 / SGSC1412 / ATCC 700720)).